The sequence spans 444 residues: Na(+)-translocating NADH-quinone reductase subunit A (444 aa).

It belongs to the NqrA family. In terms of assembly, composed of six subunits; NqrA, NqrB, NqrC, NqrD, NqrE and NqrF.

It catalyses the reaction a ubiquinone + n Na(+)(in) + NADH + H(+) = a ubiquinol + n Na(+)(out) + NAD(+). Its function is as follows. NQR complex catalyzes the reduction of ubiquinone-1 to ubiquinol by two successive reactions, coupled with the transport of Na(+) ions from the cytoplasm to the periplasm. NqrA to NqrE are probably involved in the second step, the conversion of ubisemiquinone to ubiquinol. In Shewanella denitrificans (strain OS217 / ATCC BAA-1090 / DSM 15013), this protein is Na(+)-translocating NADH-quinone reductase subunit A.